Reading from the N-terminus, the 224-residue chain is Orotate phosphoribosyltransferase (224 aa).

5-phospho-alpha-D-ribose 1-diphosphate is bound by residues lysine 26, 73–74 (YK), arginine 100, lysine 101, lysine 104, histidine 106, and 127–135 (EDVTTAGTS). 2 residues coordinate orotate: threonine 131 and arginine 160.

Belongs to the purine/pyrimidine phosphoribosyltransferase family. PyrE subfamily. In terms of assembly, homodimer. Requires Mg(2+) as cofactor.

The enzyme catalyses orotidine 5'-phosphate + diphosphate = orotate + 5-phospho-alpha-D-ribose 1-diphosphate. It functions in the pathway pyrimidine metabolism; UMP biosynthesis via de novo pathway; UMP from orotate: step 1/2. Catalyzes the transfer of a ribosyl phosphate group from 5-phosphoribose 1-diphosphate to orotate, leading to the formation of orotidine monophosphate (OMP). The chain is Orotate phosphoribosyltransferase from Clostridium acetobutylicum (strain ATCC 824 / DSM 792 / JCM 1419 / IAM 19013 / LMG 5710 / NBRC 13948 / NRRL B-527 / VKM B-1787 / 2291 / W).